The following is a 188-amino-acid chain: Threonylcarbamoyl-AMP synthase (188 aa).

The 186-residue stretch at 3 to 188 (QLQPSAVATT…RSGQILRNGS (186 aa)) folds into the YrdC-like domain.

The protein belongs to the SUA5 family. TsaC subfamily.

It is found in the cytoplasm. It catalyses the reaction L-threonine + hydrogencarbonate + ATP = L-threonylcarbamoyladenylate + diphosphate + H2O. Required for the formation of a threonylcarbamoyl group on adenosine at position 37 (t(6)A37) in tRNAs that read codons beginning with adenine. Catalyzes the conversion of L-threonine, HCO(3)(-)/CO(2) and ATP to give threonylcarbamoyl-AMP (TC-AMP) as the acyladenylate intermediate, with the release of diphosphate. The chain is Threonylcarbamoyl-AMP synthase from Shewanella frigidimarina (strain NCIMB 400).